The chain runs to 262 residues: Putative hydro-lyase ROP_32680 (262 aa).

It belongs to the D-glutamate cyclase family.

The protein is Putative hydro-lyase ROP_32680 of Rhodococcus opacus (strain B4).